Consider the following 135-residue polypeptide: Protein cornichon homolog 1 (135 aa).

3 helical membrane-spanning segments follow: residues 2–22 (VFVW…VIYQ), 51–71 (FVLQ…AMFL), and 111–131 (IVGL…TVLL).

The protein belongs to the cornichon family. Interacts with HKT1;3.

It localises to the endoplasmic reticulum membrane. The protein resides in the golgi apparatus membrane. Acts as a cargo receptor necessary for the transportation of the cation transporter HKT1;3 and possibly other secretory proteins from the endoplasmic reticulum (ER) in COPII-coated vesicles targeted to the Golgi apparatus. The protein is Protein cornichon homolog 1 of Oryza sativa subsp. japonica (Rice).